The primary structure comprises 274 residues: Large ribosomal subunit protein uL2 (274 aa).

Residues 223 to 274 (GIAMNPVDHPHGGGEGRSKGNHPVTPWGMPTKGYKTRKKKQSDKYIISRRKK) are disordered. A compositionally biased stretch (basic and acidic residues) spans 230 to 240 (DHPHGGGEGRS). Positions 256 to 274 (YKTRKKKQSDKYIISRRKK) are enriched in basic residues.

This sequence belongs to the universal ribosomal protein uL2 family. As to quaternary structure, part of the 50S ribosomal subunit. Forms a bridge to the 30S subunit in the 70S ribosome.

Its function is as follows. One of the primary rRNA binding proteins. Required for association of the 30S and 50S subunits to form the 70S ribosome, for tRNA binding and peptide bond formation. It has been suggested to have peptidyltransferase activity; this is somewhat controversial. Makes several contacts with the 16S rRNA in the 70S ribosome. The protein is Large ribosomal subunit protein uL2 of Nautilia profundicola (strain ATCC BAA-1463 / DSM 18972 / AmH).